We begin with the raw amino-acid sequence, 473 residues long: MNKLSGGGGRRTRVEGGQLGGEEWTRHGSFVNKPTRGWLHPNDKVMGPGVSYLVRYMGCVEVLQSMRALDFNTRTQVTREAISLVCEAVPGAKGATRRRKPCSRPLSSILGRSNLKFAGMPITLTVSTSSLNLMAADCKQIIANHHMQSISFASGGDPDTAEYVAYVAKDPVNQRACHILECPEGLAQDVISTIGQAFELRFKQYLRNPPRLVTPHDRMAGFDGSAWDEEEEEPPDHQYYNDFPGKEPPLGGVVDMRLREGALPGAARPTPPSAQTPSHLGATLPVGQPAGGDPEARRQMPPPPPSSGRELFDDPSYVNVQNLDKARQAGAGAGPPNPTINGSAPRDLFDMKPFEDALRMPPPPQSTAMAEQLRGEPWFHGKLSRREAEALLQVNGDFLVRESTTTPGQYVLTGLQSGQPKHLLLVDPEGVVRTKDHRFESVSHLISYHMDNHLPIISAGSELCLQQPVERKL.

Residues 1 to 26 (MNKLSGGGGRRTRVEGGQLGGEEWTR) form a disordered region. Phosphoserine is present on serine 29. Lysine 44 carries the N6-acetyllysine modification. Residues 46-229 (MGPGVSYLVR…AGFDGSAWDE (184 aa)) enclose the PID domain. The tract at residues 216-314 (HDRMAGFDGS…PSSGRELFDD (99 aa)) is disordered. The interval 230 to 377 (EEEEPPDHQY…AMAEQLRGEP (148 aa)) is CH1. Phosphotyrosine occurs at positions 239, 240, and 317. The disordered stretch occupies residues 328 to 348 (QAGAGAGPPNPTINGSAPRDL). Serine 343 is modified (phosphoserine). The SH2 domain occupies 378-469 (WFHGKLSRRE…GSELCLQQPV (92 aa)).

As to quaternary structure, interacts with CPNE3; this interaction may mediate the binding of CPNE3 with ERBB2. Interacts with the Trk receptors NTRK1, NTRK2 and NTRK3; in a phosphotyrosine-dependent manner. Interacts with the NPXY motif of tyrosine-phosphorylated IGF1R and INSR in vitro via the PID domain. Once activated, binds to GRB2. Interacts with tyrosine-phosphorylated CD3T and DDR2. Interacts with the N-terminal region of APS. Interacts with phosphorylated LRP1 and IRS4. Interacts with INPP5D/SHIP1 and INPPL1/SHIP2. Interacts with ALK, GAB2, GRB7 and KIT. Interacts with PTPN6/SHP (tyrosine phosphorylated). Identified in a complex containing FGFR4, NCAM1, CDH2, PLCG1, FRS2, SRC, SHC1, GAP43 and CTTN. Interacts with FLT4 (tyrosine-phosphorylated). Interacts with EPHB1 and GRB2; activates the MAPK/ERK cascade to regulate cell migration. Interacts with PDGFRB (tyrosine-phosphorylated). Interacts with ERBB4. Interacts with TEK/TIE2 (tyrosine-phosphorylated). Interacts with PTK2/FAK1. Interacts with CEACAM1; this interaction is CEACAM1-phosphorylation-dependent and mediates interaction with EGFR or INSR resulting in decrease coupling of SHC1 to the MAPK3/ERK1-MAPK1/ERK2 pathway. Interacts (via PID domain) with PEAK1 (when phosphorylated). Found in a complex with PPP1CA, PPP1CC, SHC1 and PEAK1. Phosphorylated by activated epidermal growth factor receptor. Phosphorylated in response to KIT signaling. Tyrosine phosphorylated in response to FLT3 and FLT4 signaling and by ligand-activated ALK. Tyrosine phosphorylated by ligand-activated PDGFRB. Tyrosine phosphorylated by TEK/TIE2. May be tyrosine phosphorylated by activated PTK2/FAK1. Tyrosine phosphorylated by activated PTK2B/PYK2. Dephosphorylation by PTPN2 may regulate interaction with GRB2.

Its subcellular location is the cytoplasm. It localises to the cell junction. The protein resides in the focal adhesion. Its function is as follows. Signaling adapter that couples activated growth factor receptors to signaling pathways. Participates in a signaling cascade initiated by activated KIT and KITLG/SCF. Participates in signaling downstream of the angiopoietin receptor TEK/TIE2, and plays a role in the regulation of endothelial cell migration and sprouting angiogenesis. This chain is SHC-transforming protein 1 (SHC1), found in Bos taurus (Bovine).